Consider the following 264-residue polypeptide: Phosphonoacetaldehyde hydrolase (264 aa).

Residue Asp-9 is the Nucleophile of the active site. 2 residues coordinate Mg(2+): Asp-9 and Ala-11. Catalysis depends on Lys-50, which acts as the Schiff-base intermediate with substrate. Mg(2+) is bound at residue Asp-183.

Belongs to the HAD-like hydrolase superfamily. PhnX family. In terms of assembly, homodimer. Requires Mg(2+) as cofactor.

It catalyses the reaction phosphonoacetaldehyde + H2O = acetaldehyde + phosphate + H(+). Functionally, involved in phosphonate degradation. This is Phosphonoacetaldehyde hydrolase from Bacillus cereus (strain G9842).